The following is a 427-amino-acid chain: Probable G-protein coupled receptor 150 (427 aa).

At 1 to 3 (MED) the chain is on the extracellular side. The chain crosses the membrane as a helical span at residues 4 to 24 (PFSLAILNPASNLSVPTQPSW). Residues 25–50 (SLNLTSEQGASVPGPHSPPRGPPSHR) lie on the Cytoplasmic side of the membrane. Residues 51–71 (IHLVFLGIILVAAVAGNTTVL) traverse the membrane as a helical segment. The Extracellular segment spans residues 72–89 (CRLCGGSSGPWPGPKRRK). The helical transmembrane segment at 90 to 110 (MDFLLVQLAAADLYASGGTAL) threads the bilayer. The Cytoplasmic portion of the chain corresponds to 111 to 170 (SQLAWELLGDPRPALGDLACRLSHLLQASGRGASAHLVALIALERQLAVRIPQGPQLPAR). Residues 171 to 191 (ALAALSWLLALLLALPPTFVV) traverse the membrane as a helical segment. The Extracellular portion of the chain corresponds to 192 to 230 (RWDAPPSSTANAWPGKHCCRGIFAPLPRWHLQVYALYEA). Residues 231 to 251 (IVGFAAPVALLGFSCGHLLCV) form a helical membrane-spanning segment. The Cytoplasmic segment spans residues 252 to 286 (WWQRGSQAPVARMPWSPSMARASLPSALPQAKVQS). The helical transmembrane segment at 287–307 (LKMSLALALLFVGCDLPYFAA) threads the bilayer. The Extracellular segment spans residues 308–327 (RLAAAWSSKPAGDWERESLV). Residues 328-348 (AAMRVLEVANSAINPLIYLFF) traverse the membrane as a helical segment. Residues 349-427 (QAGDCRLWRR…PPPCSCESAF (79 aa)) lie on the Cytoplasmic side of the membrane. The disordered stretch occupies residues 402–427 (EERNQGCLRPPPPRPRPPPCSCESAF). The segment covering 410–421 (RPPPPRPRPPPC) has biased composition (pro residues).

The protein belongs to the G-protein coupled receptor 1 family.

It localises to the cell membrane. Its function is as follows. Orphan receptor. The protein is Probable G-protein coupled receptor 150 (Gpr150) of Mus musculus (Mouse).